The following is a 246-amino-acid chain: Pyridoxine 5'-phosphate synthase (246 aa).

Position 12 (Asn12) interacts with 3-amino-2-oxopropyl phosphate. 14 to 15 (DH) serves as a coordination point for 1-deoxy-D-xylulose 5-phosphate. Arg23 contributes to the 3-amino-2-oxopropyl phosphate binding site. Catalysis depends on His48, which acts as the Proton acceptor. The 1-deoxy-D-xylulose 5-phosphate site is built by Arg50 and His55. Glu75 functions as the Proton acceptor in the catalytic mechanism. Thr105 is a binding site for 1-deoxy-D-xylulose 5-phosphate. His196 acts as the Proton donor in catalysis. 3-amino-2-oxopropyl phosphate contacts are provided by residues Gly197 and 218-219 (GH).

It belongs to the PNP synthase family. As to quaternary structure, homooctamer; tetramer of dimers.

The protein resides in the cytoplasm. It carries out the reaction 3-amino-2-oxopropyl phosphate + 1-deoxy-D-xylulose 5-phosphate = pyridoxine 5'-phosphate + phosphate + 2 H2O + H(+). Its pathway is cofactor biosynthesis; pyridoxine 5'-phosphate biosynthesis; pyridoxine 5'-phosphate from D-erythrose 4-phosphate: step 5/5. Catalyzes the complicated ring closure reaction between the two acyclic compounds 1-deoxy-D-xylulose-5-phosphate (DXP) and 3-amino-2-oxopropyl phosphate (1-amino-acetone-3-phosphate or AAP) to form pyridoxine 5'-phosphate (PNP) and inorganic phosphate. The sequence is that of Pyridoxine 5'-phosphate synthase from Pseudomonas putida (strain ATCC 47054 / DSM 6125 / CFBP 8728 / NCIMB 11950 / KT2440).